The sequence spans 142 residues: MFQGSSALTLDAKGRISIPTRHRDALMDRAEGRLTLTRHPDGCLLVYPRPEWEEKRAQIAAFPMSARALQRLLLGNAQDVDIDGSGRVLIAPELRNASGMTRDVMLLGMGAHFELWDAASLARREAEDLAQGMPDVLNQFSF.

SpoVT-AbrB domains are found at residues 5-51 and 77-120; these read SSAL…PRPE and AQDV…DAAS.

It belongs to the MraZ family. Forms oligomers.

It localises to the cytoplasm. It is found in the nucleoid. The protein is Transcriptional regulator MraZ of Bordetella bronchiseptica (strain ATCC BAA-588 / NCTC 13252 / RB50) (Alcaligenes bronchisepticus).